Consider the following 104-residue polypeptide: Large ribosomal subunit protein bL28 (104 aa).

It belongs to the bacterial ribosomal protein bL28 family.

In Wolbachia sp. subsp. Brugia malayi (strain TRS), this protein is Large ribosomal subunit protein bL28.